Here is a 252-residue protein sequence, read N- to C-terminus: Transcriptional regulatory protein HptR (252 aa).

The region spanning lysine 3 to valine 118 is the Response regulatory domain. Aspartate 55 carries the post-translational modification 4-aspartylphosphate. The HTH araC/xylS-type domain maps to asparagine 153 to glutamine 250. DNA-binding regions (H-T-H motif) lie at residues serine 170–valine 191 and histidine 217–leucine 240.

In terms of processing, phosphorylated by HptS.

Its subcellular location is the cytoplasm. Member of the two-component regulatory system HptS/HptR that regulates genes involved in hexose phosphate transport system in response to changes in extracellular phosphate sources. Activates uhpT expression to facilitate glucose-6-phosphate/G6P utilization by directly binding to its promoter. Antagonizes CcpA-dependent transcription of a subset of CcpA-regulated genes involved in antibiotic susceptibility. The polypeptide is Transcriptional regulatory protein HptR (hptR) (Staphylococcus aureus (strain Mu50 / ATCC 700699)).